The following is a 362-amino-acid chain: Biotin synthase (362 aa).

The tract at residues 14–39 (AQRTPEPLPPTSQGLARPSHDVVRGP) is disordered. The region spanning 87 to 316 (HKGGPAALCG…ARDILVCGGR (230 aa)) is the Radical SAM core domain. Residues Cys-105, Cys-109, and Cys-112 each contribute to the [4Fe-4S] cluster site. Positions 181 and 241 each coordinate [2Fe-2S] cluster.

It belongs to the radical SAM superfamily. Biotin synthase family. As to quaternary structure, homodimer. The cofactor is [4Fe-4S] cluster. It depends on [2Fe-2S] cluster as a cofactor.

The enzyme catalyses (4R,5S)-dethiobiotin + (sulfur carrier)-SH + 2 reduced [2Fe-2S]-[ferredoxin] + 2 S-adenosyl-L-methionine = (sulfur carrier)-H + biotin + 2 5'-deoxyadenosine + 2 L-methionine + 2 oxidized [2Fe-2S]-[ferredoxin]. Its pathway is cofactor biosynthesis; biotin biosynthesis; biotin from 7,8-diaminononanoate: step 2/2. In terms of biological role, catalyzes the conversion of dethiobiotin (DTB) to biotin by the insertion of a sulfur atom into dethiobiotin via a radical-based mechanism. This Nitratidesulfovibrio vulgaris (strain ATCC 29579 / DSM 644 / CCUG 34227 / NCIMB 8303 / VKM B-1760 / Hildenborough) (Desulfovibrio vulgaris) protein is Biotin synthase.